The chain runs to 368 residues: Protein pxr1 (368 aa).

Disordered regions lie at residues 1 to 28 (MGLA…TDSF) and 161 to 339 (KEKA…PMGI). Residues 15–27 (DPNNTRWSGNTDS) show a composition bias toward polar residues. The G-patch domain maps to 25–79 (TDSFGHRMMKSQGWTPGEYLGAKDAAHAEFHTEANASHIRVVIKDNTLGLGAKIG). The span at 168 to 182 (SSEESDSSSDEEEEK) shows a compositional bias: acidic residues. Basic residues-rich tracts occupy residues 209–226 (SKKS…KSKK), 242–254 (KSKK…KSKS), 271–283 (KARK…KKRK), and 301–312 (SSKKSKKDKHKS). Positions 313 to 324 (PSTSKTSTKEST) are enriched in low complexity. Positions 325–334 (PIVSESSGRS) are enriched in polar residues.

It belongs to the PINX1 family.

The protein localises to the nucleus. It is found in the nucleolus. In terms of biological role, involved in rRNA-processing at A0, A1 and A2 sites and negatively regulates telomerase. This Botryotinia fuckeliana (strain B05.10) (Noble rot fungus) protein is Protein pxr1 (pxr1).